The sequence spans 710 residues: Prolyl endopeptidase (710 aa).

Met1 carries the post-translational modification N-acetylmethionine. The residue at position 157 (Lys157) is an N6-acetyllysine. Residues Ser554, Asp641, and His680 each act as charge relay system in the active site.

The protein belongs to the peptidase S9A family.

It localises to the cytoplasm. The catalysed reaction is Hydrolysis of Pro-|-Xaa &gt;&gt; Ala-|-Xaa in oligopeptides.. Functionally, cleaves peptide bonds on the C-terminal side of prolyl residues within peptides that are up to approximately 30 amino acids long. This Mus musculus (Mouse) protein is Prolyl endopeptidase (Prep).